We begin with the raw amino-acid sequence, 610 residues long: NTPase KAP family P-loop domain-containing protein 1 (610 aa).

One can recognise a KAP NTPase domain in the interval 1 to 414 (MQQEAAQRES…NTVPITVRLL (414 aa)). 3 helical membrane passes run 22–42 (AVSG…QPII), 118–138 (VCLG…LLYL), and 157–177 (VFGG…VYSV). A disordered region spans residues 540–587 (ALKPPSPPKSPTRDTPHAAHRANSASRAPPSGRASGQAGEGHHTGDLA). Residues 560–575 (RANSASRAPPSGRASG) show a composition bias toward low complexity.

It localises to the membrane. The chain is NTPase KAP family P-loop domain-containing protein 1 (NKPD1) from Homo sapiens (Human).